The following is a 919-amino-acid chain: MSYDAYQMRPGQGRDYARQQRQQRSYQLSDDPLRQPGAPYANPAGGYPSSASMNPENPFYAAENPSFQTLAPATSEGHATYTYEEDKIPLTDSADEKYGFSQNGHSTYNLASQSGFPPSTPCGGPSSYSSALGPEDSASQVAWAKRQQAPKRGLTKKIQLTRGHWIVDHPVPTAVKNSVESRWSQGNRTQEFTHMRYTAATCDPDEFTLENGWSLRTSQQYGRDTELLIAITYYNEDRILLARTLHGVMLNIRDICKSKSSKFWRRSAEEGRPGWQRIVVSLIFDGIDPCDKEVLDLLATVGVYQDGVMKRKVDGKDTVAHLFEYTTQLSVDPTPALIQPHADDASNLVPVQMIFCLKQKNSKKINSHRWLFNALGRHLQPELCVLIDAGTKPGHKSLYYLWEAFYNNANLGGACGEIHAMIKNGRKLINPLVAAQNFEYKMSNILDKPLESTFGYVSVLPGAFSAYRFRAIQGRPLQQYFHGDHTLADRLGKKGLHGMDIFTKNMFLAEDRILCFELVAKAGDKWTLTYVKPSKGETDVPEGAAELISQRRRWLNGSFAASIYSLVHFFRIYKSNHGIIRLFFLHIQALYNAIVLLFSWFALANLWLTFSIIIEFLPDELLKNSSHTTLVVFHWINQAAKWIYVFFLVLQFVLALGNRPKGEKPTYIASFIVFGILGLYLIFVSLWLTLKALLETSVSGNIWHTLFNQTTGVLIAALAATFGIYLIASILYADPWHMVTSFPQYMMIAPSFINILNVYAFCNLHDVSWGTKGSDKADALPTVDTKKDKSTEPGTVEEIERHQDDIDETFKAVVSRAVAPFKPAETVEKPTMDDSNKTFRTRLVAFWLLTNGALTVAIENVNGLNTGLTNKQIEQQQSSKQSTYFRIILWATFGLSAFRFIGCLIYWVKRNSTRCFRKT.

Disordered regions lie at residues 1–69 (MSYD…SFQT) and 109–134 (NLAS…ALGP). Low complexity predominate over residues 11–30 (GQGRDYARQQRQQRSYQLSD). 2 N-linked (GlcNAc...) asparagine glycosylation sites follow: asparagine 187 and asparagine 556. A run of 7 helical transmembrane segments spans residues 594–614 (IVLL…SIII), 630–650 (LVVF…FLVL), 668–688 (IASF…SLWL), 713–733 (VLIA…ILYA), 742–762 (FPQY…YAFC), 843–863 (LVAF…NVNG), and 887–919 (IILW…FRKT).

It belongs to the chitin synthase family. Class III subfamily.

The protein resides in the cell membrane. Its subcellular location is the cytoplasmic vesicle membrane. The enzyme catalyses [(1-&gt;4)-N-acetyl-beta-D-glucosaminyl](n) + UDP-N-acetyl-alpha-D-glucosamine = [(1-&gt;4)-N-acetyl-beta-D-glucosaminyl](n+1) + UDP + H(+). Polymerizes chitin, a structural polymer of the cell wall and septum, by transferring the sugar moiety of UDP-GlcNAc to the non-reducing end of the growing chitin polymer. The chain is Chitin synthase 1 from Mycosarcoma maydis (Corn smut fungus).